Reading from the N-terminus, the 624-residue chain is UvrABC system protein C (624 aa).

The GIY-YIG domain maps to 27-105 (LSPGVYRMLS…IKSLGPRYNI (79 aa)). Residues 215 to 250 (RRVQHDLTARMESAAEAMEYEAAAVFRDRIRALTRI) enclose the UVR domain.

The protein belongs to the UvrC family. As to quaternary structure, interacts with UvrB in an incision complex.

Its subcellular location is the cytoplasm. The UvrABC repair system catalyzes the recognition and processing of DNA lesions. UvrC both incises the 5' and 3' sides of the lesion. The N-terminal half is responsible for the 3' incision and the C-terminal half is responsible for the 5' incision. The polypeptide is UvrABC system protein C (Paramagnetospirillum magneticum (strain ATCC 700264 / AMB-1) (Magnetospirillum magneticum)).